Here is a 1027-residue protein sequence, read N- to C-terminus: Exportin-T (1027 aa).

Belongs to the exportin family.

It is found in the nucleus. Its subcellular location is the cytoplasm. Functionally, tRNA nucleus export receptor which facilitates tRNA translocation across the nuclear pore complex. Involved in pre-tRNA splicing, probably by affecting the interaction of pre-tRNA with splicing endonuclease. This is Exportin-T (LOS1) from Pyricularia oryzae (strain 70-15 / ATCC MYA-4617 / FGSC 8958) (Rice blast fungus).